We begin with the raw amino-acid sequence, 211 residues long: Large ribosomal subunit protein uL3 (211 aa).

Q151 carries the N5-methylglutamine modification.

It belongs to the universal ribosomal protein uL3 family. Part of the 50S ribosomal subunit. Forms a cluster with proteins L14 and L19. In terms of processing, methylated by PrmB.

In terms of biological role, one of the primary rRNA binding proteins, it binds directly near the 3'-end of the 23S rRNA, where it nucleates assembly of the 50S subunit. The protein is Large ribosomal subunit protein uL3 of Francisella tularensis subsp. tularensis (strain FSC 198).